The chain runs to 193 residues: Ion-translocating oxidoreductase complex subunit A (193 aa).

6 helical membrane-spanning segments follow: residues 5–25 (LMLL…FLGL), 39–59 (IGMG…TWLI), 62–82 (FLLV…LVIA), 102–122 (VLGI…VALL), 134–154 (VLYG…FAGL), and 170–190 (APIS…FAGL).

It belongs to the NqrDE/RnfAE family. As to quaternary structure, the complex is composed of six subunits: RnfA, RnfB, RnfC, RnfD, RnfE and RnfG.

It localises to the cell inner membrane. Part of a membrane-bound complex that couples electron transfer with translocation of ions across the membrane. This chain is Ion-translocating oxidoreductase complex subunit A, found in Azoarcus sp. (strain BH72).